A 560-amino-acid polypeptide reads, in one-letter code: General negative regulator of transcription subunit 5 (560 aa).

Coiled coils occupy residues 3–26 (QRKL…DFDD), 37–71 (SNSS…SKED), and 124–177 (KRDQ…NEMD). The tract at residues 212 to 330 (CEIQPSSSNN…DSEQQLNFPP (119 aa)) is disordered. A compositionally biased stretch (polar residues) spans 215-237 (QPSSSNNEAPKEGNNQTSLSSIR). The span at 273-288 (SQSISSTPTPVSTDTP) shows a compositional bias: low complexity. The segment covering 299-311 (FDNSTLGTPTTHV) has biased composition (polar residues). Thr306 is subject to Phosphothreonine. Lys338 participates in a covalent cross-link: Glycyl lysine isopeptide (Lys-Gly) (interchain with G-Cter in ubiquitin). Ser377 carries the post-translational modification Phosphoserine.

It belongs to the CNOT2/3/5 family. In terms of assembly, forms a NOT protein complex that comprises NOT1, NOT2, NOT3, NOT4 and NOT5. Subunit of the 1.0 MDa CCR4-NOT core complex that contains CCR4, CAF1, NOT1, NOT2, NOT3, NOT4, NOT5, CAF40 and CAF130. In the complex interacts with NOT1 and NOT2. The core complex probably is part of a less characterized 1.9 MDa CCR4-NOT complex.

Its subcellular location is the cytoplasm. It is found in the nucleus. Functionally, acts as a component of the CCR4-NOT core complex, which in the nucleus seems to be a general transcription factor, and in the cytoplasm the major mRNA deadenylase involved in mRNA turnover. The NOT protein subcomplex negatively regulates the basal and activated transcription of many genes. Preferentially affects TC-type TATA element-dependent transcription. Could directly or indirectly inhibit component(s) of the general transcription machinery. In Saccharomyces cerevisiae (strain ATCC 204508 / S288c) (Baker's yeast), this protein is General negative regulator of transcription subunit 5 (NOT5).